We begin with the raw amino-acid sequence, 344 residues long: Glyceraldehyde-3-phosphate dehydrogenase (344 aa).

NAD(+)-binding positions include 11 to 12 and Gly110; that span reads TI. 139 to 141 is a D-glyceraldehyde 3-phosphate binding site; sequence SCN. Cys140 functions as the Nucleophile in the catalytic mechanism. Arg169 is an NAD(+) binding site. Position 195-196 (195-196) interacts with D-glyceraldehyde 3-phosphate; it reads HG. Residue Gln302 coordinates NAD(+).

The protein belongs to the glyceraldehyde-3-phosphate dehydrogenase family. In terms of assembly, homotetramer.

The protein localises to the cytoplasm. It carries out the reaction D-glyceraldehyde 3-phosphate + phosphate + NADP(+) = (2R)-3-phospho-glyceroyl phosphate + NADPH + H(+). It catalyses the reaction D-glyceraldehyde 3-phosphate + phosphate + NAD(+) = (2R)-3-phospho-glyceroyl phosphate + NADH + H(+). Its pathway is carbohydrate degradation; glycolysis; pyruvate from D-glyceraldehyde 3-phosphate: step 1/5. The chain is Glyceraldehyde-3-phosphate dehydrogenase from Pyrobaculum arsenaticum (strain DSM 13514 / JCM 11321 / PZ6).